The chain runs to 62 residues: uncharacterized protein (62 aa).

A run of 2 helical transmembrane segments spans residues 9-29 (HNEL…ALIG) and 42-62 (AAVV…LQLL).

It localises to the membrane. This is an uncharacterized protein from Saccharomyces cerevisiae (strain ATCC 204508 / S288c) (Baker's yeast).